A 184-amino-acid chain; its full sequence is GTP cyclohydrolase 1 (184 aa).

Residues Cys-75, His-78, and Cys-146 each coordinate Zn(2+).

The protein belongs to the GTP cyclohydrolase I family. In terms of assembly, homomer.

It carries out the reaction GTP + H2O = 7,8-dihydroneopterin 3'-triphosphate + formate + H(+). It functions in the pathway cofactor biosynthesis; 7,8-dihydroneopterin triphosphate biosynthesis; 7,8-dihydroneopterin triphosphate from GTP: step 1/1. The polypeptide is GTP cyclohydrolase 1 (Streptococcus pneumoniae (strain ATCC 700669 / Spain 23F-1)).